The sequence spans 501 residues: Calcium-dependent protein kinase 4 (501 aa).

The 259-residue stretch at 25–283 folds into the Protein kinase domain; sequence YLLGKKLGQG…AHEALCHPWI (259 aa). ATP-binding positions include 31–39 and lysine 54; that span reads LGQGQFGTT. The active-site Proton acceptor is aspartate 149. Serine 189 bears the Phosphoserine mark. The autoinhibitory domain stretch occupies residues 289–319; sequence APDKPLDPAVLSRLKQFSQMNKIKKMALRVI. EF-hand domains lie at 326 to 361, 362 to 397, 398 to 433, and 437 to 467; these read EEIG…VGSE, LMES…INKM, EREE…FGLC, and LDDM…GDGV. Ca(2+)-binding residues include aspartate 339, aspartate 341, serine 343, threonine 345, glutamate 350, aspartate 375, aspartate 377, serine 379, threonine 381, glutamate 386, aspartate 411, aspartate 413, serine 415, tyrosine 417, glutamate 422, aspartate 445, aspartate 447, aspartate 449, lysine 451, and glutamate 456.

The protein belongs to the protein kinase superfamily. Ser/Thr protein kinase family. CDPK subfamily. Interacts with Di19.

It is found in the cytoplasm. Its subcellular location is the nucleus. It catalyses the reaction L-seryl-[protein] + ATP = O-phospho-L-seryl-[protein] + ADP + H(+). It carries out the reaction L-threonyl-[protein] + ATP = O-phospho-L-threonyl-[protein] + ADP + H(+). Activated by calcium. Autophosphorylation may play an important role in the regulation of the kinase activity. Functionally, may play a role in signal transduction pathways that involve calcium as a second messenger. Functions as a regulator of the calcium-mediated abscisic acid (ABA) signaling pathway. Phosphorylates ABA-responsive transcription factors ABF1 and ABF4 in vitro. Phosphorylates the nuclear zinc finger Di19 in vitro. The chain is Calcium-dependent protein kinase 4 (CPK4) from Arabidopsis thaliana (Mouse-ear cress).